The primary structure comprises 290 residues: Programmed cell death 1 ligand 1 (290 aa).

Positions 1–18 are cleaved as a signal peptide; the sequence is MRIFAVFIFMTYWHLLNA. The Ig-like V-type domain maps to 19-127; the sequence is FTVTVPKDLY…YGGADYKRIT (109 aa). Over 19–238 the chain is Extracellular; it reads FTVTVPKDLY…LPLAHPPNER (220 aa). N-linked (GlcNAc...) asparagine glycosylation occurs at asparagine 35. 2 disulfide bridges follow: cysteine 40–cysteine 114 and cysteine 155–cysteine 209. An Ig-like C2-type domain is found at 133–225; that stretch reads PYNKINQRIL…PEENHTAELV (93 aa). N-linked (GlcNAc...) asparagine glycosylation is found at asparagine 192, asparagine 200, and asparagine 219. Residues 239–259 form a helical membrane-spanning segment; the sequence is THLVILGAILLCLGVALTFIF. The Cytoplasmic segment spans residues 260–290; the sequence is RLRKGRMMDVKKCGIQDTNSKKQSDTHLEET.

It belongs to the immunoglobulin superfamily. BTN/MOG family. Interacts with PDCD1. Interacts (via transmembrane domain) with CMTM4 and CMTM6. Interacts with (phosphorylated) STAT3; promoting nuclear translocation. Interacts with CD80. As to quaternary structure, may form homomultimers. Ubiquitinated; STUB1 likely mediates polyubiquitination of PD-L1/CD274 triggering its degradation. Ubiquitinated by MARCHF8; leading to degradation. Deubiquitinated by USP22; leading to stabilization. Highly expressed in the heart, skeletal muscle, placenta and lung. Weakly expressed in the thymus, spleen, kidney and liver. Expressed on activated T- and B-cells, dendritic cells, keratinocytes and monocytes. As to expression, widely expressed, highest in lung, liver and pituitary and in various peripheral blood cells, including neutrophils and some subtypes of lymphoid and myeloid cells.

The protein localises to the cell membrane. It is found in the early endosome membrane. The protein resides in the recycling endosome membrane. Its subcellular location is the nucleus. It localises to the endomembrane system. The protein localises to the secreted. Its function is as follows. Plays a critical role in induction and maintenance of immune tolerance to self. As a ligand for the inhibitory receptor PDCD1/PD-1, modulates the activation threshold of T-cells and limits T-cell effector response. Through a yet unknown activating receptor, may costimulate T-cell subsets that predominantly produce interleukin-10 (IL10). Can also act as a transcription coactivator: in response to hypoxia, translocates into the nucleus via its interaction with phosphorylated STAT3 and promotes transcription of GSDMC, leading to pyroptosis. In terms of biological role, the PDCD1-mediated inhibitory pathway is exploited by tumors to attenuate anti-tumor immunity and escape destruction by the immune system, thereby facilitating tumor survival. The interaction with PDCD1/PD-1 inhibits cytotoxic T lymphocytes (CTLs) effector function. The blockage of the PDCD1-mediated pathway results in the reversal of the exhausted T-cell phenotype and the normalization of the anti-tumor response, providing a rationale for cancer immunotherapy. This chain is Programmed cell death 1 ligand 1, found in Homo sapiens (Human).